We begin with the raw amino-acid sequence, 508 residues long: Glycogen synthase (508 aa).

An ADP-alpha-D-glucose-binding site is contributed by K15. A disordered region spans residues 483–508 (ARNRAETRPQTASALSYREPRPAAEY).

Belongs to the glycosyltransferase 1 family. Bacterial/plant glycogen synthase subfamily.

The catalysed reaction is [(1-&gt;4)-alpha-D-glucosyl](n) + ADP-alpha-D-glucose = [(1-&gt;4)-alpha-D-glucosyl](n+1) + ADP + H(+). The protein operates within glycan biosynthesis; glycogen biosynthesis. Its function is as follows. Synthesizes alpha-1,4-glucan chains using ADP-glucose. The sequence is that of Glycogen synthase from Paracidovorax citrulli (strain AAC00-1) (Acidovorax citrulli).